The chain runs to 473 residues: Photosystem II CP43 reaction center protein (473 aa).

Residues 1–14 (MKTLYSLRRSYPVE) constitute a propeptide that is removed on maturation. Residue threonine 15 is modified to N-acetylthreonine. Threonine 15 carries the phosphothreonine modification. 5 helical membrane-spanning segments follow: residues 69-93 (LFEV…PHLA), 134-155 (LIGP…KDRN), 178-200 (KALY…RKIT), 255-275 (KPFA…LSYS), and 291-312 (WFNN…ASQA). Position 367 (glutamate 367) interacts with [CaMn4O5] cluster. Residues 447-471 (RARAAAAGFEKGIDRDFEPVLSMTP) form a helical membrane-spanning segment.

The protein belongs to the PsbB/PsbC family. PsbC subfamily. In terms of assembly, PSII is composed of 1 copy each of membrane proteins PsbA, PsbB, PsbC, PsbD, PsbE, PsbF, PsbH, PsbI, PsbJ, PsbK, PsbL, PsbM, PsbT, PsbX, PsbY, PsbZ, Psb30/Ycf12, at least 3 peripheral proteins of the oxygen-evolving complex and a large number of cofactors. It forms dimeric complexes. It depends on Binds multiple chlorophylls and provides some of the ligands for the Ca-4Mn-5O cluster of the oxygen-evolving complex. It may also provide a ligand for a Cl- that is required for oxygen evolution. PSII binds additional chlorophylls, carotenoids and specific lipids. as a cofactor.

The protein localises to the plastid. It localises to the chloroplast thylakoid membrane. In terms of biological role, one of the components of the core complex of photosystem II (PSII). It binds chlorophyll and helps catalyze the primary light-induced photochemical processes of PSII. PSII is a light-driven water:plastoquinone oxidoreductase, using light energy to abstract electrons from H(2)O, generating O(2) and a proton gradient subsequently used for ATP formation. This chain is Photosystem II CP43 reaction center protein, found in Abies alba (Edeltanne).